Reading from the N-terminus, the 197-residue chain is Imidazoleglycerol-phosphate dehydratase (197 aa).

The protein belongs to the imidazoleglycerol-phosphate dehydratase family.

Its subcellular location is the cytoplasm. It catalyses the reaction D-erythro-1-(imidazol-4-yl)glycerol 3-phosphate = 3-(imidazol-4-yl)-2-oxopropyl phosphate + H2O. It participates in amino-acid biosynthesis; L-histidine biosynthesis; L-histidine from 5-phospho-alpha-D-ribose 1-diphosphate: step 6/9. The sequence is that of Imidazoleglycerol-phosphate dehydratase from Thioalkalivibrio sulfidiphilus (strain HL-EbGR7).